The primary structure comprises 508 residues: Glycerol kinase (508 aa).

Residue T14 coordinates ADP. ATP-binding residues include T14, T15, and S16. T14 contributes to the sn-glycerol 3-phosphate binding site. Position 18 (R18) interacts with ADP. Residues R84, E85, and Y136 each coordinate sn-glycerol 3-phosphate. Residues R84, E85, and Y136 each contribute to the glycerol site. H232 carries the phosphohistidine; by HPr modification. D246 serves as a coordination point for sn-glycerol 3-phosphate. The glycerol site is built by D246 and Q247. 2 residues coordinate ADP: T268 and G311. Residues T268, G311, Q315, and G412 each contribute to the ATP site. ADP-binding residues include G412 and N416.

Belongs to the FGGY kinase family. Homotetramer and homodimer (in equilibrium). Post-translationally, the phosphoenolpyruvate-dependent sugar phosphotransferase system (PTS), including enzyme I, and histidine-containing protein (HPr) are required for the phosphorylation, which leads to the activation of the enzyme.

The catalysed reaction is glycerol + ATP = sn-glycerol 3-phosphate + ADP + H(+). Its pathway is polyol metabolism; glycerol degradation via glycerol kinase pathway; sn-glycerol 3-phosphate from glycerol: step 1/1. Its activity is regulated as follows. Activated by phosphorylation and inhibited by fructose 1,6-bisphosphate (FBP). In terms of biological role, key enzyme in the regulation of glycerol uptake and metabolism. Catalyzes the phosphorylation of glycerol to yield sn-glycerol 3-phosphate. The polypeptide is Glycerol kinase (Streptococcus pyogenes serotype M3 (strain ATCC BAA-595 / MGAS315)).